The primary structure comprises 198 residues: Ribonuclease HII (198 aa).

Positions 10 to 198 constitute an RNase H type-2 domain; sequence QLVAGVDEVG…PVKRALGLAS (189 aa). Residues D16, E17, and D108 each coordinate a divalent metal cation.

It belongs to the RNase HII family. The cofactor is Mn(2+). Requires Mg(2+) as cofactor.

It is found in the cytoplasm. It carries out the reaction Endonucleolytic cleavage to 5'-phosphomonoester.. Endonuclease that specifically degrades the RNA of RNA-DNA hybrids. The protein is Ribonuclease HII of Escherichia coli O81 (strain ED1a).